Reading from the N-terminus, the 198-residue chain is Na(+)-translocating NADH-quinone reductase subunit E (198 aa).

The next 6 helical transmembrane spans lie at Ser11–Val31, Gly40–Phe60, Phe77–Phe97, Gly110–Val130, Val140–Ile160, and Leu176–Ile196.

Belongs to the NqrDE/RnfAE family. Composed of six subunits; NqrA, NqrB, NqrC, NqrD, NqrE and NqrF.

Its subcellular location is the cell inner membrane. The enzyme catalyses a ubiquinone + n Na(+)(in) + NADH + H(+) = a ubiquinol + n Na(+)(out) + NAD(+). In terms of biological role, NQR complex catalyzes the reduction of ubiquinone-1 to ubiquinol by two successive reactions, coupled with the transport of Na(+) ions from the cytoplasm to the periplasm. NqrA to NqrE are probably involved in the second step, the conversion of ubisemiquinone to ubiquinol. This is Na(+)-translocating NADH-quinone reductase subunit E from Tolumonas auensis (strain DSM 9187 / NBRC 110442 / TA 4).